A 987-amino-acid chain; its full sequence is Transposase for transposon Tn4430 (987 aa).

The protein belongs to the transposase 7 family.

Required for transposition of transposon Tn4430. In Bacillus thuringiensis, this protein is Transposase for transposon Tn4430 (tnpA).